The following is a 326-amino-acid chain: MDLDAIIKEAETQINVAQDASTLDAVRVDFMGKKGRMTELLKGLGKLSNEERPAAGQKINQAKQQIQQLIHQRGELLREQEMNSKLAAESIDVSLPGRTTEMGGLHPVTRTINRIESFFAELGFSVKTGPEIEDGFHNFDALNIPANHPARADHDTFYFNPDVMLRTQTSGVQIRTMEAEQPPLRIISPGRVYRNDYDQTHTPMFHQVEGLMVDKNVSFTQLKGILHDFLNNFFEADLQVRFRPSYFPFTEPSAEVDVMGKNGKWLEVLGCGMVHPNVLRAVNIDPEVYTGFAFGMGVERLTMLRYGVNDLRAFFENDLRFLKQFK.

Position 251 (Glu251) interacts with Mg(2+).

The protein belongs to the class-II aminoacyl-tRNA synthetase family. Phe-tRNA synthetase alpha subunit type 1 subfamily. Tetramer of two alpha and two beta subunits. Requires Mg(2+) as cofactor.

The protein localises to the cytoplasm. It carries out the reaction tRNA(Phe) + L-phenylalanine + ATP = L-phenylalanyl-tRNA(Phe) + AMP + diphosphate + H(+). This chain is Phenylalanine--tRNA ligase alpha subunit, found in Pseudoalteromonas atlantica (strain T6c / ATCC BAA-1087).